The following is a 320-amino-acid chain: Homoserine kinase (320 aa).

ATP is bound at residue 100–110; that stretch reads PLSSGMGSSAA.

It belongs to the GHMP kinase family. Homoserine kinase subfamily.

The protein resides in the cytoplasm. It catalyses the reaction L-homoserine + ATP = O-phospho-L-homoserine + ADP + H(+). The protein operates within amino-acid biosynthesis; L-threonine biosynthesis; L-threonine from L-aspartate: step 4/5. Catalyzes the ATP-dependent phosphorylation of L-homoserine to L-homoserine phosphate. This is Homoserine kinase from Chlorobium phaeovibrioides (strain DSM 265 / 1930) (Prosthecochloris vibrioformis (strain DSM 265)).